Reading from the N-terminus, the 693-residue chain is Elongation factor G (693 aa).

In terms of domain architecture, tr-type G spans 7–282 (EKIRNIGITA…SVIDYLPAPT (276 aa)). GTP-binding positions include 16 to 23 (AHIDAGKT), 80 to 84 (DTPGH), and 134 to 137 (NKLD).

The protein belongs to the TRAFAC class translation factor GTPase superfamily. Classic translation factor GTPase family. EF-G/EF-2 subfamily.

It is found in the cytoplasm. In terms of biological role, catalyzes the GTP-dependent ribosomal translocation step during translation elongation. During this step, the ribosome changes from the pre-translocational (PRE) to the post-translocational (POST) state as the newly formed A-site-bound peptidyl-tRNA and P-site-bound deacylated tRNA move to the P and E sites, respectively. Catalyzes the coordinated movement of the two tRNA molecules, the mRNA and conformational changes in the ribosome. This is Elongation factor G from Granulibacter bethesdensis (strain ATCC BAA-1260 / CGDNIH1).